Here is a 718-residue protein sequence, read N- to C-terminus: ATP-dependent RNA helicase homolog DQX1 (718 aa).

The Helicase ATP-binding domain maps to 54-222 (HLESSPTGVV…WGNSPIVRVP (169 aa)). 67-74 (GDPGSGKS) is an ATP binding site. The DEAQ box signature appears at 167-170 (DEAQ). The Helicase C-terminal domain occupies 245–447 (ACQAVLELCQ…ALMRALEDLD (203 aa)). The segment at 690–718 (QLREGTAEPPAAATETSSPQEYGDGCVLQ) is disordered. A compositionally biased stretch (low complexity) spans 696–708 (AEPPAAATETSSP).

As to expression, ubiquitous.

Its subcellular location is the nucleus. Its function is as follows. Might be involved in RNA metabolism; it is missing helicase motif III and may not have helicase activity. The protein is ATP-dependent RNA helicase homolog DQX1 (Dqx1) of Mus musculus (Mouse).